The primary structure comprises 473 residues: Ribulose bisphosphate carboxylase large chain (473 aa).

Substrate-binding residues include Asn-116 and Thr-166. Lys-168 functions as the Proton acceptor in the catalytic mechanism. A substrate-binding site is contributed by Lys-170. Residues Lys-194, Asp-196, and Glu-197 each coordinate Mg(2+). Lys-194 bears the N6-carboxylysine mark. His-287 serves as the catalytic Proton acceptor. Residues Arg-288, His-320, and Ser-372 each contribute to the substrate site.

This sequence belongs to the RuBisCO large chain family. Type I subfamily. In terms of assembly, heterohexadecamer of 8 large chains and 8 small chains. It depends on Mg(2+) as a cofactor.

It catalyses the reaction 2 (2R)-3-phosphoglycerate + 2 H(+) = D-ribulose 1,5-bisphosphate + CO2 + H2O. It carries out the reaction D-ribulose 1,5-bisphosphate + O2 = 2-phosphoglycolate + (2R)-3-phosphoglycerate + 2 H(+). Its function is as follows. RuBisCO catalyzes two reactions: the carboxylation of D-ribulose 1,5-bisphosphate, the primary event in carbon dioxide fixation, as well as the oxidative fragmentation of the pentose substrate. Both reactions occur simultaneously and in competition at the same active site. In Hydrogenophaga pseudoflava (Pseudomonas carboxydoflava), this protein is Ribulose bisphosphate carboxylase large chain.